Here is a 711-residue protein sequence, read N- to C-terminus: Polyribonucleotide nucleotidyltransferase (711 aa).

Residues aspartate 486 and aspartate 492 each contribute to the Mg(2+) site. A KH domain is found at 553–612 (PRIHTIKISTDKIKDVIGKGGSVIRALTEETGTTIEIEDDGTVKIAATDGEKAKYAIRRI). One can recognise an S1 motif domain in the interval 622–690 (GRIYNSKVTR…RQGRVRLSIK (69 aa)). The interval 689 to 711 (IKEATEQSQPAAAPEAPASEQAE) is disordered. Residues 694–711 (EQSQPAAAPEAPASEQAE) show a composition bias toward low complexity.

The protein belongs to the polyribonucleotide nucleotidyltransferase family. In terms of assembly, component of the RNA degradosome, which is a multiprotein complex involved in RNA processing and mRNA degradation. The cofactor is Mg(2+).

It localises to the cytoplasm. The enzyme catalyses RNA(n+1) + phosphate = RNA(n) + a ribonucleoside 5'-diphosphate. Involved in mRNA degradation. Catalyzes the phosphorolysis of single-stranded polyribonucleotides processively in the 3'- to 5'-direction. The chain is Polyribonucleotide nucleotidyltransferase from Salmonella typhi.